A 291-amino-acid polypeptide reads, in one-letter code: ATP synthase gamma chain (291 aa).

Belongs to the ATPase gamma chain family. In terms of assembly, F-type ATPases have 2 components, CF(1) - the catalytic core - and CF(0) - the membrane proton channel. CF(1) has five subunits: alpha(3), beta(3), gamma(1), delta(1), epsilon(1). CF(0) has three main subunits: a, b and c.

It localises to the cell inner membrane. Produces ATP from ADP in the presence of a proton gradient across the membrane. The gamma chain is believed to be important in regulating ATPase activity and the flow of protons through the CF(0) complex. This chain is ATP synthase gamma chain, found in Sulfurihydrogenibium sp. (strain YO3AOP1).